The following is a 172-amino-acid chain: Translation initiation factor IF-3 (172 aa).

It belongs to the IF-3 family. As to quaternary structure, monomer.

It localises to the cytoplasm. In terms of biological role, IF-3 binds to the 30S ribosomal subunit and shifts the equilibrium between 70S ribosomes and their 50S and 30S subunits in favor of the free subunits, thus enhancing the availability of 30S subunits on which protein synthesis initiation begins. The polypeptide is Translation initiation factor IF-3 (Campylobacter concisus (strain 13826)).